The primary structure comprises 317 residues: Uridylate kinase (317 aa).

9 to 12 (KISG) lines the ATP pocket. Glycine 49 provides a ligand contact to UMP. The ATP site is built by glycine 50 and arginine 54. UMP contacts are provided by residues aspartate 69 and 130 to 137 (TGRPYFTT). ATP-binding residues include asparagine 158, tyrosine 164, and aspartate 167.

Belongs to the UMP kinase family. In terms of assembly, homohexamer.

It is found in the cytoplasm. The catalysed reaction is UMP + ATP = UDP + ADP. Its pathway is pyrimidine metabolism; CTP biosynthesis via de novo pathway; UDP from UMP (UMPK route): step 1/1. Inhibited by UTP. In terms of biological role, catalyzes the reversible phosphorylation of UMP to UDP. This Malacoplasma penetrans (strain HF-2) (Mycoplasma penetrans) protein is Uridylate kinase.